The following is a 270-amino-acid chain: Hairy and enhancer of split-related protein helt (270 aa).

The disordered stretch occupies residues 1 to 24 (MNARALYKRPPPVSSSQSEASGKR). The 56-residue stretch at 59–114 (KTPVSHKVIEKRRRDRINRCLNELGKTVPMALAKQNSGKLEKAEILEMTVQYLRAL) folds into the bHLH domain. The 36-residue stretch at 136–171 (FHYGYHECMKNLVHYLTTVERMETKDTKYARILAFL) folds into the Orange domain.

The protein belongs to the HEY family.

Its subcellular location is the nucleus. Its function is as follows. Transcriptional repressor which binds preferentially to the canonical E box sequence 5'-CACGCG-3'. The polypeptide is Hairy and enhancer of split-related protein helt (helt) (Danio rerio (Zebrafish)).